The following is a 204-amino-acid chain: MGGTFDPIHNGHLVAASEVADLFDLHEVVFVPTGQPWQKRSRPVTPAEDRYLMTVIATASNPRFSVSRVDIDRGGATYTKDTLRDLRAQNPDADLYFITGADALASILSWQNWEEMFAIARFIGVSRPGYELDGKHISAAMAELPADALHLVEVPALAISSTDCRLRAEQSRPIWYLVPDGVVQYVAKRDLYRNQNPAGEGERP.

It belongs to the NadD family.

The enzyme catalyses nicotinate beta-D-ribonucleotide + ATP + H(+) = deamido-NAD(+) + diphosphate. The protein operates within cofactor biosynthesis; NAD(+) biosynthesis; deamido-NAD(+) from nicotinate D-ribonucleotide: step 1/1. Its function is as follows. Catalyzes the reversible adenylation of nicotinate mononucleotide (NaMN) to nicotinic acid adenine dinucleotide (NaAD). In Mycolicibacterium gilvum (strain PYR-GCK) (Mycobacterium gilvum (strain PYR-GCK)), this protein is Probable nicotinate-nucleotide adenylyltransferase.